A 404-amino-acid chain; its full sequence is Tripartite motif-containing 13 (404 aa).

Residues 10-56 (CPICCCLFEDPRVLPCSHSFCKKCLEGILDGNRSPTWRPPFKCPTCR) form an RING-type zinc finger. A B box-type zinc finger spans residues 87-129 (PRMSQCRVHSGQPLNIFCATDLKLICGFCATTGDHKGHKFCAL). Zn(2+)-binding residues include C92, H95, C115, and H121. The chain crosses the membrane as a helical span at residues 102-119 (IFCATDLKLICGFCATTG). Residues 186-236 (KLLRTLEHKRSEILSDLETLKLAVMQTFDPEINRLRSALEEQRRALNIAES) adopt a coiled-coil conformation.

It is found in the endoplasmic reticulum membrane. The protein operates within protein modification; protein ubiquitination. Functionally, E3 ubiquitin ligase involved in the retrotranslocation and turnover of membrane and secretory proteins from the ER through a set of processes named ER-associated degradation (ERAD). This process acts on misfolded proteins as well as in the regulated degradation of correctly folded proteins. This chain is Tripartite motif-containing 13 (trim13), found in Danio rerio (Zebrafish).